The chain runs to 354 residues: uncharacterized protein (354 aa).

It to yeast YHR056c.

This is an uncharacterized protein from Saccharomyces cerevisiae (strain ATCC 204508 / S288c) (Baker's yeast).